Here is a 144-residue protein sequence, read N- to C-terminus: Large ribosomal subunit protein uL11 (144 aa).

It belongs to the universal ribosomal protein uL11 family. In terms of assembly, part of the ribosomal stalk of the 50S ribosomal subunit. Interacts with L10 and the large rRNA to form the base of the stalk. L10 forms an elongated spine to which L12 dimers bind in a sequential fashion forming a multimeric L10(L12)X complex. Post-translationally, one or more lysine residues are methylated.

Its function is as follows. Forms part of the ribosomal stalk which helps the ribosome interact with GTP-bound translation factors. The polypeptide is Large ribosomal subunit protein uL11 (Frankia alni (strain DSM 45986 / CECT 9034 / ACN14a)).